The primary structure comprises 146 residues: MSILDEFKSFIAKGNVMDMAVGIIIGAAFTGIVSSLVADLINPIIGLITGGIDFSNLFVNLGDGDYVSLAAARDAGAPVFAYGSFITAVINFLIIAWVVFLLVKIVNRVKDAAIHKSAKEAEAQPAGPTQEQLLAEIRDLLKRSPA.

Transmembrane regions (helical) follow at residues 21-41 (VGII…ADLI), 44-64 (IIGL…LGDG), and 83-103 (GSFI…FLLV).

It belongs to the MscL family. As to quaternary structure, homopentamer.

It localises to the cell inner membrane. In terms of biological role, channel that opens in response to stretch forces in the membrane lipid bilayer. May participate in the regulation of osmotic pressure changes within the cell. This Cereibacter sphaeroides (strain ATCC 17023 / DSM 158 / JCM 6121 / CCUG 31486 / LMG 2827 / NBRC 12203 / NCIMB 8253 / ATH 2.4.1.) (Rhodobacter sphaeroides) protein is Large-conductance mechanosensitive channel.